The sequence spans 176 residues: Cytochrome b (176 aa).

A run of 3 helical transmembrane segments spans residues 33–53 (FGSL…FLAM), 77–98 (WLLR…YLHI), and 113–133 (WNVG…GYVL). The heme b site is built by H83 and H97.

The protein belongs to the cytochrome b family. As to quaternary structure, the cytochrome bc1 complex contains 11 subunits: 3 respiratory subunits (MT-CYB, CYC1 and UQCRFS1), 2 core proteins (UQCRC1 and UQCRC2) and 6 low-molecular weight proteins (UQCRH/QCR6, UQCRB/QCR7, UQCRQ/QCR8, UQCR10/QCR9, UQCR11/QCR10 and a cleavage product of UQCRFS1). This cytochrome bc1 complex then forms a dimer. The cofactor is heme b.

It localises to the mitochondrion inner membrane. Its function is as follows. Component of the ubiquinol-cytochrome c reductase complex (complex III or cytochrome b-c1 complex) that is part of the mitochondrial respiratory chain. The b-c1 complex mediates electron transfer from ubiquinol to cytochrome c. Contributes to the generation of a proton gradient across the mitochondrial membrane that is then used for ATP synthesis. This Eumops glaucinus (Wagner's mastiff bat) protein is Cytochrome b (MT-CYB).